A 264-amino-acid polypeptide reads, in one-letter code: Thymidylate synthase (264 aa).

R21 lines the dUMP pocket. H51 provides a ligand contact to (6R)-5,10-methylene-5,6,7,8-tetrahydrofolate. DUMP is bound at residue 126-127 (RR). C146 acts as the Nucleophile in catalysis. DUMP-binding positions include 166–169 (RSAD), N177, and 207–209 (HLY). Residue D169 participates in (6R)-5,10-methylene-5,6,7,8-tetrahydrofolate binding. A263 is a binding site for (6R)-5,10-methylene-5,6,7,8-tetrahydrofolate.

It belongs to the thymidylate synthase family. Bacterial-type ThyA subfamily. In terms of assembly, homodimer.

The protein resides in the cytoplasm. The catalysed reaction is dUMP + (6R)-5,10-methylene-5,6,7,8-tetrahydrofolate = 7,8-dihydrofolate + dTMP. It participates in pyrimidine metabolism; dTTP biosynthesis. Catalyzes the reductive methylation of 2'-deoxyuridine-5'-monophosphate (dUMP) to 2'-deoxythymidine-5'-monophosphate (dTMP) while utilizing 5,10-methylenetetrahydrofolate (mTHF) as the methyl donor and reductant in the reaction, yielding dihydrofolate (DHF) as a by-product. This enzymatic reaction provides an intracellular de novo source of dTMP, an essential precursor for DNA biosynthesis. This Azotobacter vinelandii (strain DJ / ATCC BAA-1303) protein is Thymidylate synthase.